Consider the following 259-residue polypeptide: Cytosolic Fe-S cluster assembly factor Nubp2 homolog (259 aa).

14–21 provides a ligand contact to ATP; sequence GKGGVGKS. Positions 188 and 191 each coordinate [4Fe-4S] cluster.

Belongs to the Mrp/NBP35 ATP-binding proteins family. NUBP2/CFD1 subfamily. Heterotetramer of 2 Nubp1 and 2 Nubp2 chains. [4Fe-4S] cluster is required as a cofactor.

The protein resides in the cytoplasm. Its function is as follows. Component of the cytosolic iron-sulfur (Fe/S) protein assembly (CIA) machinery. Required for maturation of extramitochondrial Fe-S proteins. The Nubp1-Nubp2 heterotetramer forms a Fe-S scaffold complex, mediating the de novo assembly of an Fe-S cluster and its transfer to target apoproteins. This Anopheles gambiae (African malaria mosquito) protein is Cytosolic Fe-S cluster assembly factor Nubp2 homolog.